Here is a 615-residue protein sequence, read N- to C-terminus: DNA mismatch repair protein MutL (615 aa).

Residues 363–397 (FAEPAAREPVAPRYTPAPASGSRPAAPWPNAQPGY) are disordered. The segment covering 364-391 (AEPAAREPVAPRYTPAPASGSRPAAPWP) has biased composition (low complexity).

It belongs to the DNA mismatch repair MutL/HexB family.

This protein is involved in the repair of mismatches in DNA. It is required for dam-dependent methyl-directed DNA mismatch repair. May act as a 'molecular matchmaker', a protein that promotes the formation of a stable complex between two or more DNA-binding proteins in an ATP-dependent manner without itself being part of a final effector complex. In Escherichia coli O8 (strain IAI1), this protein is DNA mismatch repair protein MutL.